The sequence spans 225 residues: MLGLDACELGEQLLELLRLALCARVLLADKDGESTPSDEVLDEIVPEYQAPGKKSMLAIWQLDPGDVSLVKYKQALLGPLPPIMDPSLPNVQVTRLTLLTEQAPGPIIMDLTGDLDALKNQVFVLKEGIEYKVKITFKVNKEIVSGLKCLHHTYRRGLRVDKAIFMVGSYGPRAQEYEFVTSVEEAPRGALARGLYVVRSLFTDDDRLNHLSWEWHLHVCQDWKD.

It belongs to the Rho GDI family. As to expression, detected only in brain, lung, kidney and testis.

It is found in the cytoplasm. Inhibits GDP/GTP exchange reaction of RhoB. Interacts specifically with the GDP- and GTP-bound forms of post-translationally processed Rhob and Rhog proteins, both of which show a growth-regulated expression in mammalian cells. Stimulates the release of the GDP-bound but not the GTP-bound RhoB protein. Also inhibits the GDP/GTP exchange of RhoB but shows less ability to inhibit the dissociation of prebound GTP. This Mus musculus (Mouse) protein is Rho GDP-dissociation inhibitor 3 (Arhgdig).